The primary structure comprises 214 residues: Octanoyltransferase (214 aa).

The BPL/LPL catalytic domain maps to 36 to 214; that stretch reads GRESEMVWLL…QQKFDTIFLQ (179 aa). Substrate-binding positions include 75–82, 147–149, and 160–162; these read RGGKYSYH, AFG, and GFS. Catalysis depends on Cys-178, which acts as the Acyl-thioester intermediate.

The protein belongs to the LipB family.

It is found in the cytoplasm. The enzyme catalyses octanoyl-[ACP] + L-lysyl-[protein] = N(6)-octanoyl-L-lysyl-[protein] + holo-[ACP] + H(+). Its pathway is protein modification; protein lipoylation via endogenous pathway; protein N(6)-(lipoyl)lysine from octanoyl-[acyl-carrier-protein]: step 1/2. In terms of biological role, catalyzes the transfer of endogenously produced octanoic acid from octanoyl-acyl-carrier-protein onto the lipoyl domains of lipoate-dependent enzymes. Lipoyl-ACP can also act as a substrate although octanoyl-ACP is likely to be the physiological substrate. The polypeptide is Octanoyltransferase (Anaplasma marginale (strain Florida)).